The primary structure comprises 342 residues: MSEAIKTDVLIVGAGPCGLFAVFELGLLDVKVHLVDILDKVGGQCAELYPEKPIYDIPGIPMITGHGLTESLMEQIKPFDPQFHLGEMIETVEQIGDPGFRVTTDAGTVFECKVLVVAAGGGSFQPKRPPVPGVEHYEGKSVHYAVRKMDEFRGKDILIVGGGDSALDWTLNLNPICKSMTLVHRRDDFRGAPHSVEQMRQLVASGKLDLKIGQITALQGENGQLEGATIKLNDNSTAQIKCDAMLPFFGLTMKLGPVANWGLHLENNLIPVDTGTFETNVPGIFAIGDINTYPGKLKLILSGFHEGALMAQKAVKYVYPDKRVVFQYTTSSTSLQKKLGVN.

FAD contacts are provided by cysteine 17, aspartate 36, glutamine 44, tyrosine 49, isoleucine 89, phenylalanine 124, aspartate 289, and threonine 330.

It belongs to the ferredoxin--NADP reductase type 2 family. As to quaternary structure, homodimer. It depends on FAD as a cofactor.

The catalysed reaction is 2 reduced [2Fe-2S]-[ferredoxin] + NADP(+) + H(+) = 2 oxidized [2Fe-2S]-[ferredoxin] + NADPH. This Rhodopseudomonas palustris (strain BisA53) protein is Ferredoxin--NADP reductase.